An 86-amino-acid polypeptide reads, in one-letter code: Small ribosomal subunit protein bS16 (86 aa).

It belongs to the bacterial ribosomal protein bS16 family.

This chain is Small ribosomal subunit protein bS16, found in Carboxydothermus hydrogenoformans (strain ATCC BAA-161 / DSM 6008 / Z-2901).